The following is a 577-amino-acid chain: 2-succinyl-5-enolpyruvyl-6-hydroxy-3-cyclohexene-1-carboxylate synthase (577 aa).

The protein belongs to the TPP enzyme family. MenD subfamily. As to quaternary structure, homodimer. Requires Mg(2+) as cofactor. Mn(2+) serves as cofactor. The cofactor is thiamine diphosphate.

The catalysed reaction is isochorismate + 2-oxoglutarate + H(+) = 5-enolpyruvoyl-6-hydroxy-2-succinyl-cyclohex-3-ene-1-carboxylate + CO2. Its pathway is quinol/quinone metabolism; 1,4-dihydroxy-2-naphthoate biosynthesis; 1,4-dihydroxy-2-naphthoate from chorismate: step 2/7. The protein operates within quinol/quinone metabolism; menaquinone biosynthesis. Its function is as follows. Catalyzes the thiamine diphosphate-dependent decarboxylation of 2-oxoglutarate and the subsequent addition of the resulting succinic semialdehyde-thiamine pyrophosphate anion to isochorismate to yield 2-succinyl-5-enolpyruvyl-6-hydroxy-3-cyclohexene-1-carboxylate (SEPHCHC). This is 2-succinyl-5-enolpyruvyl-6-hydroxy-3-cyclohexene-1-carboxylate synthase from Geobacillus kaustophilus (strain HTA426).